A 390-amino-acid chain; its full sequence is Putative nickel insertion protein (390 aa).

This sequence belongs to the LarC family.

The chain is Putative nickel insertion protein from Geotalea uraniireducens (strain Rf4) (Geobacter uraniireducens).